A 461-amino-acid chain; its full sequence is V-type ATP synthase beta chain (461 aa).

This sequence belongs to the ATPase alpha/beta chains family.

Functionally, produces ATP from ADP in the presence of a proton gradient across the membrane. The V-type beta chain is a regulatory subunit. The chain is V-type ATP synthase beta chain from Clostridium botulinum (strain ATCC 19397 / Type A).